Consider the following 93-residue polypeptide: DNA-directed RNA polymerase subunit omega (93 aa).

The protein belongs to the RNA polymerase subunit omega family. The RNAP catalytic core consists of 2 alpha, 1 beta, 1 beta' and 1 omega subunit. When a sigma factor is associated with the core the holoenzyme is formed, which can initiate transcription.

It catalyses the reaction RNA(n) + a ribonucleoside 5'-triphosphate = RNA(n+1) + diphosphate. Functionally, promotes RNA polymerase assembly. Latches the N- and C-terminal regions of the beta' subunit thereby facilitating its interaction with the beta and alpha subunits. The protein is DNA-directed RNA polymerase subunit omega of Shewanella piezotolerans (strain WP3 / JCM 13877).